A 154-amino-acid chain; its full sequence is Probable transport accessory protein MmpS4 (154 aa).

2 helical membrane passes run 19-39 (IWIP…VYRV) and 97-117 (QLPW…NLVA).

This sequence belongs to the MmpS family.

The protein localises to the cell membrane. The chain is Probable transport accessory protein MmpS4 from Mycobacterium leprae (strain TN).